A 288-amino-acid polypeptide reads, in one-letter code: MARDPSHLPRACRPPAIPVRVAEAALEISRTAIEEQLKICGHKKDADVFELFLSQKELTEVIDLSRFKKLKYLWLHHNKLHGITFLTRNYCLAELYLNNNAIFDIEGLHYLPSLHILLLHHNELINLDATVKELKGMLNLKTLTLYQNPLCQYNLYRLYIIYHLPGVELLDRNQVTEKERRSMITLFNHKKAHIVQSIAFRGKVDASWDPRSPFKQKPAQRVPSDFAFANNVDKTMFDDPEDAVFVRSMKRSAMAITSLNWDTVPTREEKYLEEKDTGPAQMLTITLR.

4 LRR repeats span residues 47 to 68, 69 to 90, 91 to 112, and 113 to 134; these read DVFE…SRFK, KLKY…TRNY, CLAE…HYLP, and SLHI…VKEL. The 39-residue stretch at 148-186 folds into the LRRCT domain; the sequence is NPLCQYNLYRLYIIYHLPGVELLDRNQVTEKERRSMITL.

This is Leucine-rich repeat-containing protein 72 (LRRC72) from Bos taurus (Bovine).